A 305-amino-acid polypeptide reads, in one-letter code: Sulfate adenylyltransferase subunit 2 (305 aa).

Positions 283-305 are disordered; that stretch reads RQGRVIDHDQSASMEKKKQEGYF.

It belongs to the PAPS reductase family. CysD subfamily. As to quaternary structure, heterodimer composed of CysD, the smaller subunit, and CysN.

It carries out the reaction sulfate + ATP + H(+) = adenosine 5'-phosphosulfate + diphosphate. The protein operates within sulfur metabolism; hydrogen sulfide biosynthesis; sulfite from sulfate: step 1/3. In terms of biological role, with CysN forms the ATP sulfurylase (ATPS) that catalyzes the adenylation of sulfate producing adenosine 5'-phosphosulfate (APS) and diphosphate, the first enzymatic step in sulfur assimilation pathway. APS synthesis involves the formation of a high-energy phosphoric-sulfuric acid anhydride bond driven by GTP hydrolysis by CysN coupled to ATP hydrolysis by CysD. The protein is Sulfate adenylyltransferase subunit 2 of Caulobacter sp. (strain K31).